A 329-amino-acid chain; its full sequence is MTENQNVYDITIIGGGPTGLFTAFYGGMRQASVKIIESLPQLGGQLSALYPEKYIYDVAGFPKVRAQELVDNLKEQMKKFDPTICLEEAVETLEKQADGVFKLVTNKQTHYSKSVIITAGNGAFQPRRLELDGAQKFEKKNLHYFVDDMNKFARKRVVVFGGGDSAVDWTLMLEPIAEQVTIIHRRDKFRAHEHSVENLINSRADIKTPYVPVELIGEEQIEQVVLQHVKTEEKVVIDVDDVIVNYGFVSSLGPIKNWGLNIQKNSIVVNSKMETNIPGIYAAGDVCTYEGKVKLIACGFGEAPTAVNNAKAYFDPSAKLQPMHSSSMF.

FAD contacts are provided by Thr18, Glu37, Gln45, Tyr50, Val90, Phe124, Asp285, and Ser326.

Belongs to the ferredoxin--NADP reductase type 2 family. As to quaternary structure, homodimer. FAD serves as cofactor.

The catalysed reaction is 2 reduced [2Fe-2S]-[ferredoxin] + NADP(+) + H(+) = 2 oxidized [2Fe-2S]-[ferredoxin] + NADPH. This is Ferredoxin--NADP reductase 2 from Bacillus cytotoxicus (strain DSM 22905 / CIP 110041 / 391-98 / NVH 391-98).